Consider the following 469-residue polypeptide: MDKKMKRTRIADALHGGLVGQEINIKGWVRTKRGNKAVNFIALNDGSTIHNMQIVADLASFDAAQMSQITTGACIGVIGTLVESQGAGQSVEVQASAIEIYGTADPATYPLQKKGHTLEFLREIAHLRPRTNTFGAIYRIRHHMAIAIHTFFHNKGYYYFHAPLITASDCEGAGQMFQVTTLNPDSLPRTEEGQVDYRKDFFGRHTSLTVSGQLEGEMAAMALGGIYTFGPTFRAENSNTPRHLAEFWMIEPEVAFLEIEDNMDLAEEFIKYCVQWALDNCMDDISFLSEHFDKELIDRLKFVLEKPFVRLAYTEGIRILEEAVKNGVKFEFPIYWGADLASEHERYLVEVHFKTPVIMTDYPKEIKSFYMKLNDDGKTVRGMDVLFPKIGEIIGGSEREADYDKLVARANEMGVPEKDIWWYLDSRRYGTAPHSGFGLGFERLLLFVTGMSNIRDVIPFPRTPNNAEF.

It belongs to the class-II aminoacyl-tRNA synthetase family. Homodimer.

It is found in the cytoplasm. The catalysed reaction is tRNA(Asn) + L-asparagine + ATP = L-asparaginyl-tRNA(Asn) + AMP + diphosphate + H(+). This chain is Asparagine--tRNA ligase, found in Porphyromonas gingivalis (strain ATCC BAA-308 / W83).